The following is a 972-amino-acid chain: Protein NRDE2 homolog (972 aa).

A compositionally biased stretch (polar residues) spans 1–17 (MPSNHNTSVPKFSSFNS). The tract at residues 1-61 (MPSNHNTSVP…RSIQSNFAVD (61 aa)) is disordered. Residues 19 to 33 (KAKKNPITKSNKKYR) show a composition bias toward basic residues. Residues 37 to 59 (DQVSSNHAKSSFPSHRSIQSNFA) are compositionally biased toward polar residues. 7 HAT repeats span residues 159–191 (LNILKAIKETDEEIKKNPGKARLWIKMCEYQER), 250–282 (WSKEETNQKFEEVLIEHPGYLNLWMKYAEYFTG), 318–350 (TDVTSNFEVEEAILHLLIRLCDFLKNCGYYELA), 355–386 (QANMELCYFYPRYLEKKLDSTFFESFSKFWNS), 608–640 (EEKPQVNKIVKKILKKYDSSVSVWNTYAQLEHL), 788–820 (YNLPKVRPFFEKGVTLFSANTAIWEVYIFFESK), and 860–894 (TNSQYFLRTLDITLNNEKLKSVAKFWRIYLKILNL). Position 970 is a phosphoserine (Ser-970).

The protein belongs to the NRDE2 family.

The protein localises to the nucleus. The chain is Protein NRDE2 homolog from Schizosaccharomyces pombe (strain 972 / ATCC 24843) (Fission yeast).